The primary structure comprises 174 residues: Type II secretion system protein M (174 aa).

Topologically, residues Met-1–Arg-32 are cytoplasmic. Residues Leu-33 to Trp-52 traverse the membrane as a helical segment. Residues Arg-53–Glu-174 are Periplasmic-facing.

Belongs to the GSP M family. Type II secretion system is composed of four main components: the outer membrane complex, the inner membrane complex, the cytoplasmic secretion ATPase and the periplasm-spanning pseudopilus. Forms homodimers. Interacts with XcpY/GspL. Interacts with XcpR/GspE and XcpS/GspF.

The protein resides in the cell inner membrane. Inner membrane component of the type II secretion system required for the energy-dependent secretion of extracellular factors such as proteases and toxins from the periplasm. Plays a role in the complex assembly and recruits XcpY resulting in a stable complex in the inner membrane. Provides thus a link between the energy-providing XcpR protein in the cytoplasm and the rest of the T2SS machinery. The polypeptide is Type II secretion system protein M (xcpZ) (Pseudomonas aeruginosa (strain ATCC 15692 / DSM 22644 / CIP 104116 / JCM 14847 / LMG 12228 / 1C / PRS 101 / PAO1)).